The primary structure comprises 109 residues: Histidine-rich carboxyl terminus protein 1 (109 aa).

The helical transmembrane segment at 13–33 (WITGTALAFLMLLWLMALCLF) threads the bilayer. The interval 77–109 (TSVGVHHHHHHSPHRLHHHKHHHRHHHAHGARR) is disordered. Over residues 81–109 (VHHHHHHSPHRLHHHKHHHRHHHAHGARR) the composition is skewed to basic residues.

Its subcellular location is the membrane. This chain is Histidine-rich carboxyl terminus protein 1 (Hrct1), found in Mus musculus (Mouse).